The sequence spans 483 residues: Wax ester synthase/diacylglycerol acyltransferase 10 (483 aa).

The Cytoplasmic portion of the chain corresponds to 1-203; it reads MTKEEVEEEP…SINAVYYAVR (203 aa). Residue histidine 143 is the Proton acceptor of the active site. The helical transmembrane segment at 204–222 threads the bilayer; the sequence is LIWNTIVDLLLLWATSLFF. Over 223–483 the chain is Lumenal; it reads KDTETPISEG…MKDTLSGKSD (261 aa). N-linked (GlcNAc...) asparagine glycosylation is found at asparagine 394 and asparagine 399.

The protein in the N-terminal section; belongs to the long-chain O-acyltransferase family. As to expression, mostly expressed in roots.

It is found in the cell membrane. It localises to the endoplasmic reticulum membrane. The enzyme catalyses an acyl-CoA + a 1,2-diacyl-sn-glycerol = a triacyl-sn-glycerol + CoA. It carries out the reaction a long chain fatty alcohol + a fatty acyl-CoA = a wax ester + CoA. It functions in the pathway glycerolipid metabolism; triacylglycerol biosynthesis. It participates in lipid metabolism. In terms of biological role, bifunctional wax ester synthase/diacylglycerol acyltransferase. Involved in cuticular wax biosynthesis. The protein is Wax ester synthase/diacylglycerol acyltransferase 10 of Arabidopsis thaliana (Mouse-ear cress).